Reading from the N-terminus, the 300-residue chain is GTPase Era (300 aa).

Residues 8-176 (RCGYVAIVGR…EGLIAKHLPE (169 aa)) form the Era-type G domain. Positions 16–23 (GRPNVGKS) are G1. Residue 16 to 23 (GRPNVGKS) participates in GTP binding. Positions 42 to 46 (QTTRH) are G2. A G3 region spans residues 63-66 (DTPG). GTP contacts are provided by residues 63–67 (DTPGM) and 125–128 (NKTD). Residues 125–128 (NKTD) are G4. Residues 155 to 157 (VSA) form a G5 region. The region spanning 199-283 (VREKIMRQLG…MLNLWVKVKG (85 aa)) is the KH type-2 domain.

Belongs to the TRAFAC class TrmE-Era-EngA-EngB-Septin-like GTPase superfamily. Era GTPase family. As to quaternary structure, monomer.

It is found in the cytoplasm. The protein resides in the cell inner membrane. Its function is as follows. An essential GTPase that binds both GDP and GTP, with rapid nucleotide exchange. Plays a role in 16S rRNA processing and 30S ribosomal subunit biogenesis and possibly also in cell cycle regulation and energy metabolism. This Pseudomonas fluorescens (strain ATCC BAA-477 / NRRL B-23932 / Pf-5) protein is GTPase Era.